The primary structure comprises 253 residues: Major prion protein (253 aa).

Positions 1–22 are cleaved as a signal peptide; the sequence is MANLGCWMLVLFVATWSDLGLC. The tract at residues 23 to 38 is interaction with ADGRG6; it reads KKRPKPGGWNTGGSRY. An interaction with GRB2, ERI3 and SYN1 region spans residues 23-230; the sequence is KKRPKPGGWN…ESQAYYQRGS (208 aa). Residues 26–108 form a disordered region; the sequence is PKPGGWNTGG…WNKPSKPKTN (83 aa). 5 repeat units span residues 51–59, 60–67, 68–75, 76–83, and 84–91. A 5 X 8 AA tandem repeats of P-H-G-G-G-W-G-Q region spans residues 51 to 91; that stretch reads PQGGGGWGQPHGGGWGQPHGGGWGQPHGGGWGQPHGGGWGQ. Positions 52–95 are enriched in gly residues; that stretch reads QGGGGWGQPHGGGWGQPHGGGWGQPHGGGWGQPHGGGWGQGGGT. Histidine 61, glycine 62, glycine 63, histidine 69, glycine 70, glycine 71, histidine 77, glycine 78, glycine 79, histidine 85, glycine 86, and glycine 87 together coordinate Cu(2+). A disulfide bridge connects residues cysteine 179 and cysteine 214. N-linked (GlcNAc...) asparagine glycosylation is found at asparagine 181 and asparagine 197. Serine 230 carries GPI-anchor amidated serine lipidation. Residues 231-253 constitute a propeptide, removed in mature form; it reads SMVLFSSPPVILLISFLIFLIVG.

This sequence belongs to the prion family. Monomer and homodimer. Has a tendency to aggregate into amyloid fibrils containing a cross-beta spine, formed by a steric zipper of superposed beta-strands. Soluble oligomers may represent an intermediate stage on the path to fibril formation. Copper binding may promote oligomerization. Interacts with GRB2, APP, ERI3/PRNPIP and SYN1. Mislocalized cytosolically exposed PrP interacts with MGRN1; this interaction alters MGRN1 subcellular location and causes lysosomal enlargement. Interacts with KIAA1191. Interacts with ADGRG6. Post-translationally, the glycosylation pattern (the amount of mono-, di- and non-glycosylated forms or glycoforms) seems to differ in normal and CJD prion.

Its subcellular location is the cell membrane. It localises to the golgi apparatus. In terms of biological role, its primary physiological function is unclear. May play a role in neuronal development and synaptic plasticity. May be required for neuronal myelin sheath maintenance. May promote myelin homeostasis through acting as an agonist for ADGRG6 receptor. May play a role in iron uptake and iron homeostasis. Soluble oligomers are toxic to cultured neuroblastoma cells and induce apoptosis (in vitro). Association with GPC1 (via its heparan sulfate chains) targets PRNP to lipid rafts. Also provides Cu(2+) or Zn(2+) for the ascorbate-mediated GPC1 deaminase degradation of its heparan sulfate side chains. The polypeptide is Major prion protein (PRNP) (Homo sapiens (Human)).